The chain runs to 479 residues: GTPase Obg (479 aa).

The Obg domain maps to Pro-2–Val-159. The region spanning Ala-160–Ser-340 is the OBG-type G domain. Residues Gly-166 to Ser-173, Phe-191 to Val-195, Asp-212 to Gly-215, Asn-292 to Asp-295, and Ser-321 to Val-323 each bind GTP. Residues Ser-173 and Thr-193 each contribute to the Mg(2+) site. One can recognise an OCT domain in the interval Pro-358–Pro-436. A disordered region spans residues Thr-438–Asp-479. Basic and acidic residues predominate over residues Thr-451–Lys-467.

This sequence belongs to the TRAFAC class OBG-HflX-like GTPase superfamily. OBG GTPase family. Monomer. The cofactor is Mg(2+).

It is found in the cytoplasm. Its function is as follows. An essential GTPase which binds GTP, GDP and possibly (p)ppGpp with moderate affinity, with high nucleotide exchange rates and a fairly low GTP hydrolysis rate. Plays a role in control of the cell cycle, stress response, ribosome biogenesis and in those bacteria that undergo differentiation, in morphogenesis control. In Mycobacterium ulcerans (strain Agy99), this protein is GTPase Obg.